Here is a 159-residue protein sequence, read N- to C-terminus: Alpha-lactalbumin (159 aa).

The first 19 residues, 1 to 19, serve as a signal peptide directing secretion; sequence MMRFVPLFLACISLPAFQA. The 123-residue stretch at 20–142 folds into the C-type lysozyme domain; the sequence is TEFTKCEVSH…KLEQWRCEKP (123 aa). Disulfide bonds link Cys-25/Cys-139, Cys-47/Cys-130, Cys-80/Cys-96, and Cys-92/Cys-110. Asn-64 carries N-linked (GlcNAc...) asparagine glycosylation. Residues Lys-98, Asp-101, Asp-106, and Asp-107 each coordinate Ca(2+).

It belongs to the glycosyl hydrolase 22 family. As to quaternary structure, lactose synthase (LS) is a heterodimer of a catalytic component, beta1,4-galactosyltransferase (beta4Gal-T1) and a regulatory component, alpha-lactalbumin (LA). Mammary gland specific. Secreted in milk.

The protein resides in the secreted. Regulatory subunit of lactose synthase, changes the substrate specificity of galactosyltransferase in the mammary gland making glucose a good acceptor substrate for this enzyme. This enables LS to synthesize lactose, the major carbohydrate component of milk. In other tissues, galactosyltransferase transfers galactose onto the N-acetylglucosamine of the oligosaccharide chains in glycoproteins. This chain is Alpha-lactalbumin (Lalba), found in Rattus norvegicus (Rat).